The chain runs to 434 residues: Transcription initiation factor IIE subunit alpha (434 aa).

In terms of domain architecture, HTH TFE/IIEalpha-type spans 8–99 (VQRLIKMIMR…DFCSTIDSIK (92 aa)). Residues 124–151 (CPFCNKKFSSLDVLSLVTNEGTFACNVC) form a C4-type zinc finger. Disordered stretches follow at residues 217-251 (QQNL…EKRE), 357-408 (STDY…EMQE), and 415-434 (INGF…FEDV). The segment covering 226 to 238 (DVRLSTSSPSITV) has biased composition (polar residues). Composition is skewed to basic and acidic residues over residues 241–251 (SADKETDEKRE) and 376–385 (IQNKRTKSIE). Positions 386–399 (ENNSLPPIVSTNGI) are enriched in polar residues. Residues 419–434 (NEDDEDDEDEADFEDV) are compositionally biased toward acidic residues.

It belongs to the TFIIE alpha subunit family. TFIIE is a tetramer of two alpha (tfa1) and two beta (tfa2) subunits.

It is found in the nucleus. Its function is as follows. Recruits TFIIH to the initiation complex and stimulates the RNA polymerase II C-terminal domain kinase and DNA-dependent ATPase activities of TFIIH. Both TFIIH and TFIIE are required for promoter clearance by RNA polymerase. This chain is Transcription initiation factor IIE subunit alpha (tfa1), found in Schizosaccharomyces pombe (strain 972 / ATCC 24843) (Fission yeast).